Here is a 375-residue protein sequence, read N- to C-terminus: Citrate synthase (375 aa).

Active-site residues include histidine 266 and aspartate 317.

The protein belongs to the citrate synthase family. Homohexamer.

It carries out the reaction oxaloacetate + acetyl-CoA + H2O = citrate + CoA + H(+). The protein operates within carbohydrate metabolism; tricarboxylic acid cycle; isocitrate from oxaloacetate: step 1/2. Its activity is regulated as follows. Allosterically inhibited by NADH. This Mycolicibacterium smegmatis (Mycobacterium smegmatis) protein is Citrate synthase (gltA).